Consider the following 427-residue polypeptide: Actin-related protein 3 (427 aa).

It belongs to the actin family. ARP3 subfamily. As to quaternary structure, component of the Arp2/3 complex composed of arp2, act2, arc1/p41-ARC, arc2/p34-ARC, arc3/p21-ARC, arc4/p20-ARC and arc5/p16-ARC.

Its subcellular location is the cytoplasm. The protein resides in the cytoskeleton. The protein localises to the actin patch. Functionally, functions as ATP-binding component of the Arp2/3 complex which is involved in regulation of actin polymerization and together with an activating nucleation-promoting factor (NPF) mediates the formation of branched actin networks. Seems to contact the pointed end of the daughter actin filament. May be involved in cytokinesis. The chain is Actin-related protein 3 (act2) from Schizosaccharomyces pombe (strain 972 / ATCC 24843) (Fission yeast).